A 244-amino-acid chain; its full sequence is Cysteine-rich secretory protein 1 (244 aa).

Residues 1–19 form the signal peptide; that stretch reads MALMLVLFFLAAVLPPSLL. Residues 44-170 enclose the SCP domain; the sequence is SKHNQLRRMV…PLRYYYVCHY (127 aa). The N-linked (GlcNAc...) asparagine glycan is linked to Asn-145. Disulfide bonds link Cys-190-Cys-197, Cys-193-Cys-202, Cys-206-Cys-239, Cys-215-Cys-233, and Cys-224-Cys-237. The region spanning 206–239 is the ShKT domain; the sequence is CGHEDKYTNCKYLKKMLSCEHELLKKGCKATCLC.

Belongs to the CRISP family. Mainly found in the cauda epididymis where it is synthesized by the principal cells and secreted into the lumen. Binds to the heads of spermatozoa. Also expressed in the submandibular gland.

It localises to the cytoplasmic vesicle. The protein localises to the secretory vesicle. In terms of biological role, this protein is supposed to help spermatozoa undergo functional maturation while they move from the testis to the ductus deferens. The polypeptide is Cysteine-rich secretory protein 1 (Crisp1) (Mus musculus (Mouse)).